The following is a 236-amino-acid chain: N-acetyl-alpha-D-glucosaminyl L-malate deacetylase 1 (236 aa).

The Zn(2+) site is built by His12, Asp15, and His113.

Belongs to the PIGL family. The cofactor is Zn(2+).

It catalyses the reaction (S)-malyl N-acetyl-alpha-D-glucosaminide + H2O = (S)-malyl alpha-D-glucosaminide + acetate. Functionally, involved in bacillithiol (BSH) biosynthesis. Catalyzes the second step of the pathway, the deacetylation of N-acetylglucosaminylmalate (GlcNAc-Mal) to glucosamine malate (GlcN-Mal). This Bacillus subtilis (strain 168) protein is N-acetyl-alpha-D-glucosaminyl L-malate deacetylase 1.